A 251-amino-acid chain; its full sequence is Imidazole glycerol phosphate synthase subunit HisF (251 aa).

Catalysis depends on residues D11 and D130.

The protein belongs to the HisA/HisF family. As to quaternary structure, heterodimer of HisH and HisF.

It is found in the cytoplasm. It catalyses the reaction 5-[(5-phospho-1-deoxy-D-ribulos-1-ylimino)methylamino]-1-(5-phospho-beta-D-ribosyl)imidazole-4-carboxamide + L-glutamine = D-erythro-1-(imidazol-4-yl)glycerol 3-phosphate + 5-amino-1-(5-phospho-beta-D-ribosyl)imidazole-4-carboxamide + L-glutamate + H(+). The protein operates within amino-acid biosynthesis; L-histidine biosynthesis; L-histidine from 5-phospho-alpha-D-ribose 1-diphosphate: step 5/9. Its function is as follows. IGPS catalyzes the conversion of PRFAR and glutamine to IGP, AICAR and glutamate. The HisF subunit catalyzes the cyclization activity that produces IGP and AICAR from PRFAR using the ammonia provided by the HisH subunit. The chain is Imidazole glycerol phosphate synthase subunit HisF from Prosthecochloris aestuarii (strain DSM 271 / SK 413).